Consider the following 212-residue polypeptide: Orotate phosphoribosyltransferase (212 aa).

5-phospho-alpha-D-ribose 1-diphosphate-binding positions include R95, K99, H101, and 121 to 129 (DDLITTGGS). T125 is a binding site for orotate.

This sequence belongs to the purine/pyrimidine phosphoribosyltransferase family. PyrE subfamily. As to quaternary structure, homodimer. Mg(2+) serves as cofactor.

It carries out the reaction orotidine 5'-phosphate + diphosphate = orotate + 5-phospho-alpha-D-ribose 1-diphosphate. It participates in pyrimidine metabolism; UMP biosynthesis via de novo pathway; UMP from orotate: step 1/2. Its function is as follows. Catalyzes the transfer of a ribosyl phosphate group from 5-phosphoribose 1-diphosphate to orotate, leading to the formation of orotidine monophosphate (OMP). In Lactobacillus johnsonii (strain CNCM I-12250 / La1 / NCC 533), this protein is Orotate phosphoribosyltransferase.